The chain runs to 306 residues: Immune protein Tsi7 (306 aa).

Interacts with Tse7.

Its function is as follows. Immunity protein that plays a role in preventing early activation of toxin Tse7. Protects thereby cells from Tse7 DNase activity. This chain is Immune protein Tsi7, found in Pseudomonas aeruginosa (strain ATCC 15692 / DSM 22644 / CIP 104116 / JCM 14847 / LMG 12228 / 1C / PRS 101 / PAO1).